Here is a 148-residue protein sequence, read N- to C-terminus: Cysteine proteinase inhibitor 5 (148 aa).

Positions 1-25 (MASKLYYAVAPLVLVLLLLAPLSSA) are cleaved as a signal peptide. Residues 99–103 (QVVSG) carry the Secondary area of contact motif.

It belongs to the cystatin family. Phytocystatin subfamily.

Its subcellular location is the secreted. In terms of biological role, specific inhibitor of cysteine proteinases. Probably involved in the regulation of endogenous processes and in defense against pests and pathogens. The chain is Cysteine proteinase inhibitor 5 from Oryza sativa subsp. japonica (Rice).